The chain runs to 158 residues: Chromobox protein homolog 7 (158 aa).

One can recognise a Chromo domain in the interval 11–69 (FAVESIRKKRVRKGKVEYLVKWKGWPPKYSTWEPEEHILDPRLVMAYEEKEEKDRASGY). The interval 60 to 124 (KEEKDRASGY…PPPWTPMLPS (65 aa)) is disordered. A compositionally biased stretch (basic residues) spans 68–78 (GYRKRGPKPKR).

As to quaternary structure, component of a PRC1-like complex. Distinct PRC1-like core complexes are composed of a RING1 subunit (RING1B or RING1A), one of the six PCGF proteins (PCGF1-6), one PHC protein (PHC1-3) and one of the CBX proteins (CBX2, CBX4, CBX6, CBX7 or CBX8). The composition of the PRC1 complex may differ between the PRC1 complex in pluripotent embryonic stem cells containing RNF2, CBX7 and PCGF2, and the PRC1 complex in differentiating cells containing RNF2, CBX2, CBX4 and BMI1. Interacts with RING1. Interacts with RNF2/RING1B. Interacts with PCGF1, PCGF2, PCGF3, PCGF5 and PCGF6. Interacts (via chromodomain) with histone H3K9Me3 and H3K27me3. Interacts with H3K9Me2 and H4K20Me1. Interacts (via chromodomain) with single-stranded and double-stranded RNA; RNA binding seems to be required for the localization to chromatin.

The protein resides in the nucleus. Its subcellular location is the chromosome. Component of a Polycomb group (PcG) multiprotein PRC1-like complex, a complex class required to maintain the transcriptionally repressive state of many genes, including Hox genes, throughout development. PcG PRC1 complex acts via chromatin remodeling and modification of histones; it mediates monoubiquitination of histone H2A 'Lys-119', rendering chromatin heritably changed in its expressibility. Promotes histone H3 trimethylation at 'Lys-9' (H3K9me3). Binds to histone H3 trimethylated 'Lys-9' (H3K9me3) or at 'Lys-27' (H3K27me3). May possibly also bind trimethylated lysine residues in other proteins (in vitro). Binds non-coding, single-stranded and double-stranded RNA. Plays a role in the timely repression of differentiation-specific genes in pluripotent embryonic stem cells to maintain the undifferentiated state. Regulator of cellular lifespan by maintaining the repression of CDKN2A, but not by inducing telomerase activity. This chain is Chromobox protein homolog 7 (Cbx7), found in Rattus norvegicus (Rat).